The primary structure comprises 305 residues: Mycothiol acetyltransferase (305 aa).

2 N-acetyltransferase domains span residues 10 to 154 (DRLD…VVLE) and 156 to 305 (ISLR…YARA). Glutamate 38 lines the 1D-myo-inositol 2-(L-cysteinylamino)-2-deoxy-alpha-D-glucopyranoside pocket. 82–84 (LAV) contributes to the acetyl-CoA binding site. 3 residues coordinate 1D-myo-inositol 2-(L-cysteinylamino)-2-deoxy-alpha-D-glucopyranoside: glutamate 183, lysine 225, and glutamate 238. Residues 242 to 244 (VAI) and 249 to 255 (QGRGLGR) contribute to the acetyl-CoA site. Tyrosine 276 lines the 1D-myo-inositol 2-(L-cysteinylamino)-2-deoxy-alpha-D-glucopyranoside pocket. 281–286 (NASALH) provides a ligand contact to acetyl-CoA.

This sequence belongs to the acetyltransferase family. MshD subfamily. As to quaternary structure, monomer.

The enzyme catalyses 1D-myo-inositol 2-(L-cysteinylamino)-2-deoxy-alpha-D-glucopyranoside + acetyl-CoA = mycothiol + CoA + H(+). In terms of biological role, catalyzes the transfer of acetyl from acetyl-CoA to desacetylmycothiol (Cys-GlcN-Ins) to form mycothiol. This Rhodococcus opacus (strain B4) protein is Mycothiol acetyltransferase.